A 168-amino-acid polypeptide reads, in one-letter code: ATP synthase subunit d, mitochondrial (168 aa).

This sequence belongs to the ATPase d subunit family. In terms of assembly, F-type ATPases have 2 components, CF(1) - the catalytic core - and CF(0) - the membrane proton channel. CF(0) seems to have nine subunits: a, b, c, d, e, f, g, F6 and 8 (or A6L).

Its subcellular location is the mitochondrion. The protein localises to the mitochondrion inner membrane. Functionally, mitochondrial membrane ATP synthase (F(1)F(0) ATP synthase or Complex V) produces ATP from ADP in the presence of a proton gradient across the membrane which is generated by electron transport complexes of the respiratory chain. F-type ATPases consist of two structural domains, F(1) - containing the extramembraneous catalytic core, and F(0) - containing the membrane proton channel, linked together by a central stalk and a peripheral stalk. During catalysis, ATP synthesis in the catalytic domain of F(1) is coupled via a rotary mechanism of the central stalk subunits to proton translocation. Part of the complex F(0) domain and the peripheric stalk, which acts as a stator to hold the catalytic alpha(3)beta(3) subcomplex and subunit a/ATP6 static relative to the rotary elements. The polypeptide is ATP synthase subunit d, mitochondrial (Arabidopsis thaliana (Mouse-ear cress)).